Here is a 1481-residue protein sequence, read N- to C-terminus: Structural protein ORF147 (1481 aa).

Disordered regions lie at residues 65-88 and 1319-1403; these read AEKR…ENLE and DEKL…PPIP. 3 stretches are compositionally biased toward low complexity: residues 73–84, 1323–1336, and 1393–1403; these read KGSQKKSNSSSS, SSTV…SPKT, and SSRTTITPPIP.

It is found in the virion. This chain is Structural protein ORF147, found in Noctuidae (owlet moths).